A 128-amino-acid chain; its full sequence is MRFAIVVTGPAYGTQQASSAFQFAQALIADGHELSSVFFYREGVYNANQLTSPASDEFDLVRAWQQLNAQHGVALNICVAAALRRGVVDETEAGRLGLASSNLQQGFTLSGLGALAEASLTCDRVVQF.

Residue cysteine 78 is the Cysteine persulfide intermediate of the active site.

Belongs to the DsrE/TusD family. In terms of assembly, heterohexamer, formed by a dimer of trimers. The hexameric TusBCD complex contains 2 copies each of TusB, TusC and TusD. The TusBCD complex interacts with TusE.

The protein resides in the cytoplasm. Part of a sulfur-relay system required for 2-thiolation of 5-methylaminomethyl-2-thiouridine (mnm(5)s(2)U) at tRNA wobble positions. Accepts sulfur from TusA and transfers it in turn to TusE. In Escherichia coli (strain K12 / MC4100 / BW2952), this protein is Sulfurtransferase TusD.